The following is a 98-amino-acid chain: Mitochondrial import inner membrane translocase subunit tim8 (98 aa).

The Twin CX3C motif signature appears at 44-67 (CWPKCIGNIGNKLDKSEEQCLQNC). 2 cysteine pairs are disulfide-bonded: C44/C67 and C48/C63.

Belongs to the small Tim family. As to quaternary structure, heterohexamer; composed of 3 copies of TIM8 and 3 copies of TIM13, named soluble 70 kDa complex. Associates with the TIM22 complex, whose core is composed of TIM22 and TIM54. Interacts with the transmembrane regions of multi-pass transmembrane proteins in transit.

It is found in the mitochondrion inner membrane. In terms of biological role, mitochondrial intermembrane chaperone that participates in the import and insertion of some multi-pass transmembrane proteins into the mitochondrial inner membrane. Also required for the transfer of beta-barrel precursors from the TOM complex to the sorting and assembly machinery (SAM complex) of the outer membrane. Acts as a chaperone-like protein that protects the hydrophobic precursors from aggregation and guide them through the mitochondrial intermembrane space. The TIM8-TIM13 complex is non essential and only mediates the import of few proteins, while the predominant TIM9-TIM10 70 kDa complex is crucial and mediates the import of much more proteins. This Schizosaccharomyces pombe (strain 972 / ATCC 24843) (Fission yeast) protein is Mitochondrial import inner membrane translocase subunit tim8 (tim8).